We begin with the raw amino-acid sequence, 464 residues long: Protein FAM90A22 (464 aa).

Disordered stretches follow at residues 1–43 (MMAR…PRLK), 70–389 (PATL…HDGA), and 415–437 (HSPE…SEAP). Basic and acidic residues-rich tracts occupy residues 74 to 89 (GKKE…KPRA) and 97 to 114 (NKDK…DPQR). A compositionally biased stretch (low complexity) spans 182 to 197 (SLSPLRKTSLSSSSSL).

It belongs to the FAM90 family.

In Homo sapiens (Human), this protein is Protein FAM90A22.